A 179-amino-acid polypeptide reads, in one-letter code: Natural killer cells antigen CD94 (179 aa).

Topologically, residues 1-10 (MAVFKTTLWR) are cytoplasmic. Residues 11-31 (LISGTLGIICLSLMATLGILL) form a helical; Signal-anchor for type II membrane protein membrane-spanning segment. Residues 32-179 (KNSFTKLSIE…NRYICKQQLI (148 aa)) are Extracellular-facing. 2 disulfide bridges follow: Cys58–Cys70 and Cys61–Cys72. A C-type lectin domain is found at 68–175 (YRCNCYFISS…CEDKNRYICK (108 aa)). Residues Asn83 and Asn132 are each glycosylated (N-linked (GlcNAc...) asparagine). 2 disulfides stabilise this stretch: Cys89–Cys174 and Cys152–Cys166.

Can form disulfide-bonded heterodimer with NKG2 family members KLRC1 and KLRC2. KLRD1-KLRC1 heterodimer interacts with peptide-bound MHC-E-B2M heterotrimeric complex. KLRD1 plays a prominent role in directly interacting with MHC-E. KLRD1-KLRC1 interacts with much higher affinity with peptide-bound MHC-E-B2M than KLRD1-KLRC2. Interacts with the adapter protein TYROBP/DAP12; this interaction is required for cell surface expression and cell activation. As to expression, natural killer cells.

It localises to the cell membrane. Functionally, immune receptor involved in self-nonself discrimination. In complex with KLRC1 or KLRC2 on cytotoxic and regulatory lymphocyte subsets, recognizes non-classical major histocompatibility (MHC) class Ib molecule MHC-E loaded with self-peptides derived from the signal sequence of classical MHC class Ia and non-classical MHC class Ib molecules. Enables cytotoxic cells to monitor the expression of MHC class I molecules in healthy cells and to tolerate self. Primarily functions as a ligand binding subunit as it lacks the capacity to signal. In terms of biological role, KLRD1-KLRC1 acts as an immune inhibitory receptor. Key inhibitory receptor on natural killer (NK) cells that regulates their activation and effector functions. Dominantly counteracts T cell receptor signaling on a subset of memory/effector CD8-positive T cells as part of an antigen-driven response to avoid autoimmunity. On intraepithelial CD8-positive gamma-delta regulatory T cells triggers TGFB1 secretion, which in turn limits the cytotoxic programming of intraepithelial CD8-positive alpha-beta T cells, distinguishing harmless from pathogenic antigens. In MHC-E-rich tumor microenvironment, acts as an immune inhibitory checkpoint and may contribute to progressive loss of effector functions of NK cells and tumor-specific T cells, a state known as cell exhaustion. Upon MHC-E-peptide binding, transmits intracellular signals through KLRC1 immunoreceptor tyrosine-based inhibition motifs (ITIMs) by recruiting INPP5D/SHIP-1 and INPPL1/SHIP-2 tyrosine phosphatases to ITIMs, and ultimately opposing signals transmitted by activating receptors through dephosphorylation of proximal signaling molecules. KLRD1-KLRC2 acts as an immune activating receptor. On cytotoxic lymphocyte subsets recognizes MHC-E loaded with signal sequence-derived peptides from non-classical MHC class Ib MHC-G molecules, likely playing a role in the generation and effector functions of adaptive NK cells and in maternal-fetal tolerance during pregnancy. Regulates the effector functions of terminally differentiated cytotoxic lymphocyte subsets, and in particular may play a role in adaptive NK cell response to viral infection. Upon MHC-E-peptide binding, transmits intracellular signals via the adapter protein TYROBP/DAP12, triggering the phosphorylation of proximal signaling molecules and cell activation. The chain is Natural killer cells antigen CD94 (KLRD1) from Pan troglodytes (Chimpanzee).